We begin with the raw amino-acid sequence, 206 residues long: Protein GrpE (206 aa).

The span at 1–14 (MDKKNEQQEVREEN) shows a compositional bias: basic and acidic residues. A disordered region spans residues 1 to 56 (MDKKNEQQEVREENDTSINQESETQVELEEEVVNEECETSSEKTDEKEVDDENVTD). Residues 24–39 (TQVELEEEVVNEECET) show a composition bias toward acidic residues.

This sequence belongs to the GrpE family. As to quaternary structure, homodimer.

The protein localises to the cytoplasm. Functionally, participates actively in the response to hyperosmotic and heat shock by preventing the aggregation of stress-denatured proteins, in association with DnaK and GrpE. It is the nucleotide exchange factor for DnaK and may function as a thermosensor. Unfolded proteins bind initially to DnaJ; upon interaction with the DnaJ-bound protein, DnaK hydrolyzes its bound ATP, resulting in the formation of a stable complex. GrpE releases ADP from DnaK; ATP binding to DnaK triggers the release of the substrate protein, thus completing the reaction cycle. Several rounds of ATP-dependent interactions between DnaJ, DnaK and GrpE are required for fully efficient folding. The sequence is that of Protein GrpE from Clostridioides difficile (strain 630) (Peptoclostridium difficile).